The sequence spans 417 residues: Histidine--tRNA ligase (417 aa).

Belongs to the class-II aminoacyl-tRNA synthetase family. As to quaternary structure, homodimer.

Its subcellular location is the cytoplasm. It carries out the reaction tRNA(His) + L-histidine + ATP = L-histidyl-tRNA(His) + AMP + diphosphate + H(+). This is Histidine--tRNA ligase from Acetivibrio thermocellus (strain ATCC 27405 / DSM 1237 / JCM 9322 / NBRC 103400 / NCIMB 10682 / NRRL B-4536 / VPI 7372) (Clostridium thermocellum).